Reading from the N-terminus, the 213-residue chain is Peptidoglycan-N-acetylglucosamine deacetylase BC_3618 (213 aa).

The NodB homology domain occupies 22 to 203 (KIIAITFDDG…ELKKQGYRFV (182 aa)). The active-site Proton acceptor is the Asp-29. Zn(2+)-binding residues include Asp-30, His-80, and His-84. His-175 functions as the Proton donor in the catalytic mechanism.

This sequence belongs to the polysaccharide deacetylase family. Requires Zn(2+) as cofactor.

The catalysed reaction is peptidoglycan-N-acetyl-D-glucosamine + H2O = peptidoglycan-D-glucosamine + acetate.. Inhibited by CuCl(2) and ZnCl(2). Its function is as follows. Catalyzes the deacetylation of N-acetylglucosamine (GlcNAc) residues in peptidoglycan. Also acts on soluble chitin substrates and N-acetylchitooligomers. Acts on cell wall peptidoglycan from the Gram-positive bacteria B.cereus and B.subtilis and the Gram-negative bacterium H.pylori. Not active on acetylated xylan. In Bacillus cereus (strain ATCC 14579 / DSM 31 / CCUG 7414 / JCM 2152 / NBRC 15305 / NCIMB 9373 / NCTC 2599 / NRRL B-3711), this protein is Peptidoglycan-N-acetylglucosamine deacetylase BC_3618.